A 396-amino-acid polypeptide reads, in one-letter code: L-lactate dehydrogenase (396 aa).

The FMN hydroxy acid dehydrogenase domain occupies 1-380 (MIISAASDYR…TQDSLVQGLG (380 aa)). Y24 serves as a coordination point for substrate. The FMN site is built by S106 and Q127. Y129 provides a ligand contact to substrate. T155 provides a ligand contact to FMN. Substrate is bound at residue R164. K251 lines the FMN pocket. The active-site Proton acceptor is the H275. A substrate-binding site is contributed by R278. 306-330 (DSGIRNGLDVVRMIALGADTILLGR) provides a ligand contact to FMN.

Belongs to the FMN-dependent alpha-hydroxy acid dehydrogenase family. It depends on FMN as a cofactor.

Its subcellular location is the cell inner membrane. The enzyme catalyses (S)-lactate + A = pyruvate + AH2. Functionally, catalyzes the conversion of L-lactate to pyruvate. Is coupled to the respiratory chain. This chain is L-lactate dehydrogenase, found in Escherichia coli O81 (strain ED1a).